We begin with the raw amino-acid sequence, 225 residues long: MKHVLKNDWGPLLAPEFEKEYYRELDVFLKEEYSIHVVYPKVEEIFNALEYTSYENTKVVILGQDPYHGPNQAHGLSFSVQPGVKTPPSLLNMYKELRDEYGYDIPNNGYLVKWAEQGVLLLNTVLTVRQGEANSHKGKGWEHFTDRVIELLNEREKPVIFILWGRHAQAKKKLITNSNHHIIESVHPSPLSARRGFFGSKPYSKVNTILANMGEREIDWEIPNL.

The active-site Proton acceptor is the aspartate 65.

It belongs to the uracil-DNA glycosylase (UDG) superfamily. UNG family.

The protein resides in the cytoplasm. It carries out the reaction Hydrolyzes single-stranded DNA or mismatched double-stranded DNA and polynucleotides, releasing free uracil.. Its function is as follows. Excises uracil residues from the DNA which can arise as a result of misincorporation of dUMP residues by DNA polymerase or due to deamination of cytosine. This Bacillus cereus (strain AH820) protein is Uracil-DNA glycosylase.